We begin with the raw amino-acid sequence, 289 residues long: Acetyl-coenzyme A carboxylase carboxyl transferase subunit beta (289 aa).

One can recognise a CoA carboxyltransferase N-terminal domain in the interval 28–289 (VMTKCPKCKK…QGGEMAVWQS (262 aa)). The Zn(2+) site is built by Cys32, Cys35, Cys51, and Cys54. The C4-type zinc-finger motif lies at 32-54 (CPKCKKIMYTKELLKNLKVCVNC).

It belongs to the AccD/PCCB family. Acetyl-CoA carboxylase is a heterohexamer composed of biotin carboxyl carrier protein (AccB), biotin carboxylase (AccC) and two subunits each of ACCase subunit alpha (AccA) and ACCase subunit beta (AccD). Requires Zn(2+) as cofactor.

It is found in the cytoplasm. The enzyme catalyses N(6)-carboxybiotinyl-L-lysyl-[protein] + acetyl-CoA = N(6)-biotinyl-L-lysyl-[protein] + malonyl-CoA. Its pathway is lipid metabolism; malonyl-CoA biosynthesis; malonyl-CoA from acetyl-CoA: step 1/1. Functionally, component of the acetyl coenzyme A carboxylase (ACC) complex. Biotin carboxylase (BC) catalyzes the carboxylation of biotin on its carrier protein (BCCP) and then the CO(2) group is transferred by the transcarboxylase to acetyl-CoA to form malonyl-CoA. The sequence is that of Acetyl-coenzyme A carboxylase carboxyl transferase subunit beta from Bacillus cereus (strain AH187).